The primary structure comprises 120 residues: Large ribosomal subunit protein eL8 (120 aa).

The protein belongs to the eukaryotic ribosomal protein eL8 family. In terms of assembly, part of the 50S ribosomal subunit. Probably part of the RNase P complex.

The protein resides in the cytoplasm. In terms of biological role, multifunctional RNA-binding protein that recognizes the K-turn motif in ribosomal RNA, the RNA component of RNase P, box H/ACA, box C/D and box C'/D' sRNAs. The protein is Large ribosomal subunit protein eL8 of Methanosarcina acetivorans (strain ATCC 35395 / DSM 2834 / JCM 12185 / C2A).